A 452-amino-acid polypeptide reads, in one-letter code: NADH-quinone oxidoreductase subunit H (452 aa).

Transmembrane regions (helical) follow at residues 28–48 (IILI…LMMI), 96–116 (VIYI…FSVI), 136–156 (LPVA…GIVL), 177–197 (VISY…YAGT), 210–230 (IWFA…MIGE), 264–286 (AEYV…GYLA), 301–321 (WWPA…FVWV), 335–355 (KLGW…VAVI), and 366–386 (YVTA…LWAW).

This sequence belongs to the complex I subunit 1 family. As to quaternary structure, NDH-1 is composed of 14 different subunits. Subunits NuoA, H, J, K, L, M, N constitute the membrane sector of the complex.

The protein resides in the cell membrane. The catalysed reaction is a quinone + NADH + 5 H(+)(in) = a quinol + NAD(+) + 4 H(+)(out). In terms of biological role, NDH-1 shuttles electrons from NADH, via FMN and iron-sulfur (Fe-S) centers, to quinones in the respiratory chain. The immediate electron acceptor for the enzyme in this species is believed to be ubiquinone. Couples the redox reaction to proton translocation (for every two electrons transferred, four hydrogen ions are translocated across the cytoplasmic membrane), and thus conserves the redox energy in a proton gradient. This subunit may bind ubiquinone. The sequence is that of NADH-quinone oxidoreductase subunit H from Thermobifida fusca (strain YX).